The primary structure comprises 271 residues: Putative phosphoenolpyruvate synthase regulatory protein (271 aa).

151-158 is an ADP binding site; that stretch reads GVSRSGKT.

This sequence belongs to the pyruvate, phosphate/water dikinase regulatory protein family. PSRP subfamily.

The catalysed reaction is [pyruvate, water dikinase] + ADP = [pyruvate, water dikinase]-phosphate + AMP + H(+). The enzyme catalyses [pyruvate, water dikinase]-phosphate + phosphate + H(+) = [pyruvate, water dikinase] + diphosphate. Functionally, bifunctional serine/threonine kinase and phosphorylase involved in the regulation of the phosphoenolpyruvate synthase (PEPS) by catalyzing its phosphorylation/dephosphorylation. The chain is Putative phosphoenolpyruvate synthase regulatory protein from Burkholderia orbicola (strain MC0-3).